The primary structure comprises 223 residues: Alpha-S2-casein (223 aa).

The N-terminal stretch at 1–15 is a signal peptide; the sequence is MKFFIFTCLLAVALA. Phosphoserine occurs at positions 23, 24, 25, 72, 73, 74, 77, 145, 147, 151, and 159. Positions 77-141 form a repeat; that stretch reads SAEVAPEEIK…AGPFTPTVNR (65 aa). Residues 159–223 constitute a repeat; sequence STEVFTKKTK…TNAIPYVRYL (65 aa).

This sequence belongs to the alpha-casein family. As to expression, mammary gland specific. Secreted in milk.

The protein localises to the secreted. Important role in the capacity of milk to transport calcium phosphate. The protein is Alpha-S2-casein (CSN1S2) of Capra hircus (Goat).